We begin with the raw amino-acid sequence, 74 residues long: MSAGTKASELRELGNEELLAKLREAKEELFNLRFQAATGQLENHGRLKAVRKDIARIYTLMRERELGIETVESA.

Belongs to the universal ribosomal protein uL29 family.

This Streptomyces coelicolor (strain ATCC BAA-471 / A3(2) / M145) protein is Large ribosomal subunit protein uL29 (rpmC).